Reading from the N-terminus, the 965-residue chain is UvrABC system protein A (965 aa).

Residue 32 to 39 (GLSGSGKS) coordinates ATP. Residues 254-281 (CPVCDYSLPELEPRLFSFNAPMGACPAC) form a C4-type zinc finger. ABC transporter domains are found at residues 311–588 (WDRR…PRSL) and 608–937 (PNAT…HFLA). Position 641–648 (641–648 (GVSGSGKS)) interacts with ATP. The C4-type zinc finger occupies 740–766 (CEACEGDGLIKVEMHFLPDVYVPCDIC).

Belongs to the ABC transporter superfamily. UvrA family. As to quaternary structure, forms a heterotetramer with UvrB during the search for lesions.

Its subcellular location is the cytoplasm. Its function is as follows. The UvrABC repair system catalyzes the recognition and processing of DNA lesions. UvrA is an ATPase and a DNA-binding protein. A damage recognition complex composed of 2 UvrA and 2 UvrB subunits scans DNA for abnormalities. When the presence of a lesion has been verified by UvrB, the UvrA molecules dissociate. This chain is UvrABC system protein A, found in Xylella fastidiosa (strain Temecula1 / ATCC 700964).